The primary structure comprises 383 residues: ATP phosphoribosyltransferase regulatory subunit (383 aa).

This sequence belongs to the class-II aminoacyl-tRNA synthetase family. HisZ subfamily. In terms of assembly, heteromultimer composed of HisG and HisZ subunits.

The protein localises to the cytoplasm. It participates in amino-acid biosynthesis; L-histidine biosynthesis; L-histidine from 5-phospho-alpha-D-ribose 1-diphosphate: step 1/9. In terms of biological role, required for the first step of histidine biosynthesis. May allow the feedback regulation of ATP phosphoribosyltransferase activity by histidine. The protein is ATP phosphoribosyltransferase regulatory subunit of Chromobacterium violaceum (strain ATCC 12472 / DSM 30191 / JCM 1249 / CCUG 213 / NBRC 12614 / NCIMB 9131 / NCTC 9757 / MK).